Here is a 131-residue protein sequence, read N- to C-terminus: UPF0102 protein YraN (131 aa).

The segment covering 1-19 (MATVPTRSGSPRQLTTKQT) has biased composition (polar residues). The disordered stretch occupies residues 1–20 (MATVPTRSGSPRQLTTKQTG).

This sequence belongs to the UPF0102 family.

In Escherichia fergusonii (strain ATCC 35469 / DSM 13698 / CCUG 18766 / IAM 14443 / JCM 21226 / LMG 7866 / NBRC 102419 / NCTC 12128 / CDC 0568-73), this protein is UPF0102 protein YraN.